The following is a 99-amino-acid chain: Integration host factor subunit alpha (99 aa).

Belongs to the bacterial histone-like protein family. In terms of assembly, heterodimer of an alpha and a beta chain.

Functionally, this protein is one of the two subunits of integration host factor, a specific DNA-binding protein that functions in genetic recombination as well as in transcriptional and translational control. The polypeptide is Integration host factor subunit alpha (Anaeromyxobacter sp. (strain Fw109-5)).